A 184-amino-acid polypeptide reads, in one-letter code: MGVRNFIDRVFTVISDLILKLLPASKQEKQAFAYYKAGMAAQAEGDYAEALENYYESLYLDEDQYDRSYTLYNIGLIYAKNENYPRALEYYHQAVSLNSNLPQALNNIAAIYHRQGLLALEMASQDYDAEMEISEEYEYIELAKGLFDKAAEYWYQALKLAPDNYPRARNWLRITGRAKSLDSF.

TPR repeat units follow at residues 31–64, 68–101, and 131–164; these read AFAY…DEDQ, SYTL…NSNL, and MEIS…APDN.

This sequence belongs to the Ycf3 family.

The protein resides in the plastid. It is found in the chloroplast thylakoid membrane. Functionally, essential for the assembly of the photosystem I (PSI) complex. May act as a chaperone-like factor to guide the assembly of the PSI subunits. The chain is Photosystem I assembly protein Ycf3 from Thalassiosira pseudonana (Marine diatom).